The primary structure comprises 357 residues: Aurora kinase A- and ninein-interacting protein (357 aa).

A compositionally biased stretch (polar residues) spans 71 to 91 (LQPGKTNGSDQKSVSSHTESQ). The segment at 71-98 (LQPGKTNGSDQKSVSSHTESQINKESKK) is disordered. The interval 187-357 (RKEEKGDSAR…EGNQVIRHQF (171 aa)) is interaction with AURKA. Phosphoserine is present on residues Ser-267 and Ser-292. Residues 281 to 357 (KDSWSQLFTE…EGNQVIRHQF (77 aa)) form an interaction with RBBP8/CtIP region.

The protein belongs to the AUNIP family. Interacts (via C-terminus) with AURKA (via C-terminus). Interacts (via N-terminus) with NIN; this interaction blocks NIN phosphorylation by both AURKA and GSK3B. Identified in a complex with NIN and AURKA. Interacts with RBBP8/CtIP. Expressed in heart, skeletal muscles, placenta and testis.

The protein resides in the nucleus. It localises to the chromosome. The protein localises to the cytoplasm. Its subcellular location is the cytoskeleton. It is found in the microtubule organizing center. The protein resides in the centrosome. It localises to the spindle pole. In terms of biological role, DNA-binding protein that accumulates at DNA double-strand breaks (DSBs) following DNA damage and promotes DNA resection and homologous recombination. Serves as a sensor of DNA damage: binds DNA with a strong preference for DNA substrates that mimic structures generated at stalled replication forks, and anchors RBBP8/CtIP to DSB sites to promote DNA end resection and ensuing homologous recombination repair. Inhibits non-homologous end joining (NHEJ). Required for the dynamic movement of AURKA at the centrosomes and spindle apparatus during the cell cycle. The sequence is that of Aurora kinase A- and ninein-interacting protein from Homo sapiens (Human).